The following is a 483-amino-acid chain: Serine/threonine-protein kinase BSK4 (483 aa).

Residue Gly2 is the site of N-myristoyl glycine attachment. The Protein kinase domain occupies 56-322 (ENVVSEHGET…DTEVLSHVLM (267 aa)). Residues 62–70 (HGETAPNVV) and Lys84 each bind ATP. Asp178 acts as the Proton acceptor in catalysis.

It belongs to the protein kinase superfamily. Ser/Thr protein kinase family.

The protein localises to the cell membrane. It catalyses the reaction L-seryl-[protein] + ATP = O-phospho-L-seryl-[protein] + ADP + H(+). It carries out the reaction L-threonyl-[protein] + ATP = O-phospho-L-threonyl-[protein] + ADP + H(+). Functionally, probable serine/threonine kinase that acts as a positive regulator of brassinosteroid (BR) signaling downstream of the receptor kinase BRI1. Functions redundantly with BSK3, BSK6, BSK7 and BSK8. The sequence is that of Serine/threonine-protein kinase BSK4 from Arabidopsis thaliana (Mouse-ear cress).